We begin with the raw amino-acid sequence, 80 residues long: Putative antitoxin VapB44 (80 aa).

Positions 40–68 (NQNPQPAASQEDAFHGFEPLPHRGGAVSN) are disordered.

Functionally, possibly the antitoxin component of a type II toxin-antitoxin (TA) system. Its cognate toxin is VapC44 (Potential). This Mycobacterium tuberculosis (strain CDC 1551 / Oshkosh) protein is Putative antitoxin VapB44 (vapB44).